The primary structure comprises 131 residues: D-ribose pyranase (131 aa).

Residue H20 is the Proton donor of the active site. Residues D28, H98, and 120–122 contribute to the substrate site; that span reads YSN.

The protein belongs to the RbsD / FucU family. RbsD subfamily. In terms of assembly, homodecamer.

Its subcellular location is the cytoplasm. It catalyses the reaction beta-D-ribopyranose = beta-D-ribofuranose. It functions in the pathway carbohydrate metabolism; D-ribose degradation; D-ribose 5-phosphate from beta-D-ribopyranose: step 1/2. Catalyzes the interconversion of beta-pyran and beta-furan forms of D-ribose. The chain is D-ribose pyranase from Lactobacillus johnsonii (strain CNCM I-12250 / La1 / NCC 533).